The following is a 162-amino-acid chain: Ribose-5-phosphate isomerase B (162 aa).

Residues 11-12 (DH) and 70-74 (GSGNG) each bind D-ribulose 5-phosphate. Catalysis depends on glutamate 75, which acts as the Proton acceptor. Histidine 102 serves as the catalytic Proton donor. D-ribulose 5-phosphate is bound by residues asparagine 103, arginine 113, arginine 137, and arginine 141.

Belongs to the LacAB/RpiB family. In terms of assembly, homodimer.

The catalysed reaction is aldehydo-D-ribose 5-phosphate = D-ribulose 5-phosphate. Its pathway is carbohydrate degradation; pentose phosphate pathway; D-ribose 5-phosphate from D-ribulose 5-phosphate (non-oxidative stage): step 1/1. Catalyzes the interconversion of ribulose-5-P and ribose-5-P. In Mycobacterium leprae (strain TN), this protein is Ribose-5-phosphate isomerase B.